The sequence spans 327 residues: Putative D-threonate 4-phosphate dehydrogenase (327 aa).

His-139 and Thr-140 together coordinate substrate. Residues His-169, His-213, and His-268 each contribute to the a divalent metal cation site. Positions 276, 285, and 294 each coordinate substrate.

This sequence belongs to the PdxA family. PdxA2 subfamily. In terms of assembly, homodimer. It depends on a divalent metal cation as a cofactor.

It catalyses the reaction 4-O-phospho-D-threonate + NAD(+) = dihydroxyacetone phosphate + CO2 + NADH. Functionally, catalyzes the NAD-dependent oxidation and subsequent decarboxylation of D-threonate 4-phosphate to produce dihydroxyacetone phosphate (DHAP). The protein is Putative D-threonate 4-phosphate dehydrogenase of Salmonella typhi.